Consider the following 449-residue polypeptide: Glucose-6-phosphate isomerase (449 aa).

Residue Glu291 is the Proton donor of the active site. Residues His312 and Lys426 contribute to the active site.

It belongs to the GPI family.

The protein resides in the cytoplasm. It carries out the reaction alpha-D-glucose 6-phosphate = beta-D-fructose 6-phosphate. The protein operates within carbohydrate biosynthesis; gluconeogenesis. It participates in carbohydrate degradation; glycolysis; D-glyceraldehyde 3-phosphate and glycerone phosphate from D-glucose: step 2/4. Functionally, catalyzes the reversible isomerization of glucose-6-phosphate to fructose-6-phosphate. This Streptococcus mutans serotype c (strain ATCC 700610 / UA159) protein is Glucose-6-phosphate isomerase.